Consider the following 143-residue polypeptide: Ribosome-binding factor A (143 aa).

A compositionally biased stretch (basic and acidic residues) spans 116-128 (SDDEAKQKQHGDQ). Residues 116-143 (SDDEAKQKQHGDQQDVSQSSDDKSEGED) form a disordered region.

Belongs to the RbfA family. In terms of assembly, monomer. Binds 30S ribosomal subunits, but not 50S ribosomal subunits or 70S ribosomes.

The protein resides in the cytoplasm. One of several proteins that assist in the late maturation steps of the functional core of the 30S ribosomal subunit. Associates with free 30S ribosomal subunits (but not with 30S subunits that are part of 70S ribosomes or polysomes). Required for efficient processing of 16S rRNA. May interact with the 5'-terminal helix region of 16S rRNA. The polypeptide is Ribosome-binding factor A (Shewanella sediminis (strain HAW-EB3)).